The chain runs to 272 residues: Undecaprenyl-diphosphatase (272 aa).

The next 7 membrane-spanning stretches (helical) occupy residues 2 to 22, 43 to 63, 82 to 102, 110 to 130, 185 to 205, 224 to 244, and 252 to 272; these read FDII…FLPI, FINM…ILLY, WQLW…GLPL, LHTP…FIIL, YVAT…VSIL, VLMT…KWLL, and FKPF…VMFI.

It belongs to the UppP family.

Its subcellular location is the cell membrane. The enzyme catalyses di-trans,octa-cis-undecaprenyl diphosphate + H2O = di-trans,octa-cis-undecaprenyl phosphate + phosphate + H(+). Catalyzes the dephosphorylation of undecaprenyl diphosphate (UPP). Confers resistance to bacitracin. The polypeptide is Undecaprenyl-diphosphatase (Lacticaseibacillus paracasei (strain ATCC 334 / BCRC 17002 / CCUG 31169 / CIP 107868 / KCTC 3260 / NRRL B-441) (Lactobacillus paracasei)).